Reading from the N-terminus, the 148-residue chain is Protein PLANT CADMIUM RESISTANCE 9 (148 aa).

The helical transmembrane segment at 59-78 threads the bilayer; it reads LAGLMVVAMSSIGCGWYYAS.

The protein belongs to the cornifelin family.

Its subcellular location is the membrane. In terms of biological role, may be involved in cadmium resistance. The sequence is that of Protein PLANT CADMIUM RESISTANCE 9 (PCR9) from Arabidopsis thaliana (Mouse-ear cress).